Reading from the N-terminus, the 377-residue chain is Nuclear pore complex protein NUP54 (377 aa).

Low complexity predominate over residues methionine 1 to proline 18. Residues methionine 1–proline 104 are disordered. 7 consecutive repeat copies span residues phenylalanine 2–glycine 3, phenylalanine 11–glycine 12, phenylalanine 20–glycine 21, phenylalanine 27–glycine 28, phenylalanine 36–glycine 37, phenylalanine 49–glycine 50, and phenylalanine 87–glycine 88. Residues phenylalanine 2–glycine 88 are 7 X 2 AA repeats of F-G. Over residues alanine 19–alanine 32 the composition is skewed to polar residues. Residues proline 39–proline 104 show a composition bias toward low complexity.

It belongs to the NUP54 family. In terms of assembly, part of the nuclear pore complex (NPC). The NPC has an eight-fold symmetrical structure comprising a central transport channel and two rings, the cytoplasmic and nuclear rings, to which eight filaments are attached. The cytoplasmic filaments have loose ends, while the nuclear filaments are joined in a distal ring, forming a nuclear basket. NPCs are highly dynamic in configuration and composition, and can be devided in 3 subcomplexes, the NUP62 subcomplex, the NUP107-160 subcomplex and the NUP93 subcomplex, containing approximately 30 different nucleoporin proteins.

It localises to the nucleus envelope. It is found in the nucleus. Its subcellular location is the nuclear pore complex. In Arabidopsis thaliana (Mouse-ear cress), this protein is Nuclear pore complex protein NUP54.